Here is a 264-residue protein sequence, read N- to C-terminus: Thymidylate synthase (264 aa).

Arginine 21 contributes to the dUMP binding site. Residue histidine 51 coordinates (6R)-5,10-methylene-5,6,7,8-tetrahydrofolate. 126 to 127 (RR) provides a ligand contact to dUMP. The active-site Nucleophile is cysteine 146. DUMP-binding positions include 166–169 (RSAD), asparagine 177, and 207–209 (HLY). Residue aspartate 169 participates in (6R)-5,10-methylene-5,6,7,8-tetrahydrofolate binding. Serine 263 contributes to the (6R)-5,10-methylene-5,6,7,8-tetrahydrofolate binding site.

This sequence belongs to the thymidylate synthase family. Bacterial-type ThyA subfamily. Homodimer.

The protein localises to the cytoplasm. It carries out the reaction dUMP + (6R)-5,10-methylene-5,6,7,8-tetrahydrofolate = 7,8-dihydrofolate + dTMP. Its pathway is pyrimidine metabolism; dTTP biosynthesis. In terms of biological role, catalyzes the reductive methylation of 2'-deoxyuridine-5'-monophosphate (dUMP) to 2'-deoxythymidine-5'-monophosphate (dTMP) while utilizing 5,10-methylenetetrahydrofolate (mTHF) as the methyl donor and reductant in the reaction, yielding dihydrofolate (DHF) as a by-product. This enzymatic reaction provides an intracellular de novo source of dTMP, an essential precursor for DNA biosynthesis. This chain is Thymidylate synthase, found in Laribacter hongkongensis (strain HLHK9).